Here is a 434-residue protein sequence, read N- to C-terminus: Septin-6 (434 aa).

A2 carries the N-acetylalanine modification. S27 bears the Phosphoserine mark. The Septin-type G domain occupies 39–305 (QGFCFNILCV…ELYRRCKLEE (267 aa)). The G1 motif stretch occupies residues 49–56 (GETGLGKS). GTP is bound by residues 49–56 (GETGLGKS), G104, 185–193 (KSDAISKSE), G239, and R254. Residues 101 to 104 (STVG) are G3 motif. The interval 184 to 187 (AKSD) is G4 motif. The stretch at 321 to 407 (QETYEAKRNE…QRKAAAELLQ (87 aa)) forms a coiled coil. N6-acetyllysine is present on K367. The tract at residues 403-434 (AELLQSQGSQAGGSQTLKRDKEKKNNPWLCIE) is disordered. The segment covering 407–417 (QSQGSQAGGSQ) has biased composition (low complexity). The residue at position 416 (S416) is a Phosphoserine. At T418 the chain carries Phosphothreonine.

The protein belongs to the TRAFAC class TrmE-Era-EngA-EngB-Septin-like GTPase superfamily. Septin GTPase family. As to quaternary structure, septins polymerize into heterooligomeric protein complexes that form filaments, and associate with cellular membranes, actin filaments and microtubules. GTPase activity is required for filament formation. Filaments are assembled from asymmetrical heterotrimers, composed of SEPTIN2, SEPTIN6 and SEPTIN7 that associate head-to-head to form a hexameric unit. Within the trimer, directly interacts with SEPTIN2 and SEPTIN7. Also interacts with SEPTIN9 and SEPTIN12. Interaction with SEPTIN12 alters filament structure. Component of a septin core octameric complex consisting of SEPTIN12, SEPTIN7, SEPTIN6 and SEPTIN2 or SEPTIN4 in the order 12-7-6-2-2-6-7-12 or 12-7-6-4-4-6-7-12 and located in the sperm annulus. Interacts with SOCS7. Interacts with HNRNPA1. As to expression, expressed in the cerebral cortex (at protein level). Associated with synaptic vesicles in various brain regions, including glomeruli of the olfactory bulb (at protein level).

It is found in the cytoplasm. Its subcellular location is the cytoskeleton. It localises to the spindle. The protein localises to the chromosome. The protein resides in the centromere. It is found in the kinetochore. Its subcellular location is the cleavage furrow. It localises to the midbody. The protein localises to the cell projection. The protein resides in the cilium. It is found in the flagellum. In terms of biological role, filament-forming cytoskeletal GTPase. Required for normal organization of the actin cytoskeleton. Involved in cytokinesis. Forms a filamentous structure with SEPTIN12, SEPTIN6, SEPTIN2 and probably SEPTIN4 at the sperm annulus which is required for the structural integrity and motility of the sperm tail during postmeiotic differentiation. In Mus musculus (Mouse), this protein is Septin-6.